We begin with the raw amino-acid sequence, 290 residues long: 4-hydroxybenzoate octaprenyltransferase (290 aa).

Transmembrane regions (helical) follow at residues 40-60 (IAGA…GVVI), 99-119 (LALF…LNEL), 120-140 (TFWL…TKRF), 142-162 (FMPQ…AFAA), 165-185 (GEVP…TVAY), 215-235 (LMIA…GHRL), 239-259 (WPWY…HSLI), and 267-287 (SFHA…GLYF).

The protein belongs to the UbiA prenyltransferase family. Requires Mg(2+) as cofactor.

Its subcellular location is the cell inner membrane. The enzyme catalyses all-trans-octaprenyl diphosphate + 4-hydroxybenzoate = 4-hydroxy-3-(all-trans-octaprenyl)benzoate + diphosphate. It participates in cofactor biosynthesis; ubiquinone biosynthesis. Catalyzes the prenylation of para-hydroxybenzoate (PHB) with an all-trans polyprenyl group. Mediates the second step in the final reaction sequence of ubiquinone-8 (UQ-8) biosynthesis, which is the condensation of the polyisoprenoid side chain with PHB, generating the first membrane-bound Q intermediate 3-octaprenyl-4-hydroxybenzoate. The chain is 4-hydroxybenzoate octaprenyltransferase from Alcanivorax borkumensis (strain ATCC 700651 / DSM 11573 / NCIMB 13689 / SK2).